Consider the following 388-residue polypeptide: Succinate--CoA ligase [ADP-forming] subunit beta (388 aa).

One can recognise an ATP-grasp domain in the interval lysine 9–glutamate 244. ATP contacts are provided by residues lysine 46, glycine 53–glycine 55, glutamate 99, valine 102, and glutamate 107. Mg(2+) contacts are provided by asparagine 199 and aspartate 213. Substrate is bound by residues asparagine 264 and glycine 320–methionine 322.

This sequence belongs to the succinate/malate CoA ligase beta subunit family. Heterotetramer of two alpha and two beta subunits. Mg(2+) serves as cofactor.

It carries out the reaction succinate + ATP + CoA = succinyl-CoA + ADP + phosphate. The enzyme catalyses GTP + succinate + CoA = succinyl-CoA + GDP + phosphate. It functions in the pathway carbohydrate metabolism; tricarboxylic acid cycle; succinate from succinyl-CoA (ligase route): step 1/1. Succinyl-CoA synthetase functions in the citric acid cycle (TCA), coupling the hydrolysis of succinyl-CoA to the synthesis of either ATP or GTP and thus represents the only step of substrate-level phosphorylation in the TCA. The beta subunit provides nucleotide specificity of the enzyme and binds the substrate succinate, while the binding sites for coenzyme A and phosphate are found in the alpha subunit. The polypeptide is Succinate--CoA ligase [ADP-forming] subunit beta (Anaplasma marginale (strain St. Maries)).